The sequence spans 445 residues: Argininosuccinate synthase (445 aa).

Residues 17-25 and alanine 43 each bind ATP; that span reads AFSGGLDTS. Residue tyrosine 99 participates in L-citrulline binding. 2 residues coordinate ATP: glycine 129 and threonine 131. L-aspartate is bound by residues threonine 131, asparagine 135, and aspartate 136. Asparagine 135 provides a ligand contact to L-citrulline. Aspartate 136 lines the ATP pocket. The L-citrulline site is built by arginine 139 and serine 192. Residue aspartate 194 participates in ATP binding. Residues threonine 201, glutamate 203, and glutamate 280 each contribute to the L-citrulline site.

The protein belongs to the argininosuccinate synthase family. Type 2 subfamily. Homotetramer.

It localises to the cytoplasm. The enzyme catalyses L-citrulline + L-aspartate + ATP = 2-(N(omega)-L-arginino)succinate + AMP + diphosphate + H(+). The protein operates within amino-acid biosynthesis; L-arginine biosynthesis; L-arginine from L-ornithine and carbamoyl phosphate: step 2/3. The protein is Argininosuccinate synthase of Burkholderia cenocepacia (strain ATCC BAA-245 / DSM 16553 / LMG 16656 / NCTC 13227 / J2315 / CF5610) (Burkholderia cepacia (strain J2315)).